A 149-amino-acid chain; its full sequence is Oligosaccharyltransferase complex subunit OSTC (149 aa).

The Cytoplasmic portion of the chain corresponds to 1 to 32; sequence METLYRVPFLVLECPNLKLKKPPWLHMPSAMT. Residues 33–53 form a helical membrane-spanning segment; it reads VYALVVVSYFLITGGIIYDVI. Topologically, residues 54 to 83 are extracellular; it reads VEPPSVGSMTDEHGHQRPVAFLAYRVNGQY. The chain crosses the membrane as a helical span at residues 84–104; that stretch reads IMEGLASSFLFTMGGLGFIIL. At 105-117 the chain is on the cytoplasmic side; that stretch reads DRSNAPNIPKLNR. A helical transmembrane segment spans residues 118–138; that stretch reads FLLLFIGFVCVLLSFFMARVF. The Extracellular segment spans residues 139–149; that stretch reads MRMKLPGYLMG.

This sequence belongs to the OSTC family. In terms of assembly, component of STT3A-containing oligosaccharyl transferase (OST-A) complex. STT3A-containing complex assembly occurs through the formation of 3 subcomplexes. Subcomplex 1 contains RPN1 and TMEM258, subcomplex 2 contains the STT3A-specific subunits STT3A, DC2/OSTC, and KCP2 as well as the core subunit OST4, and subcomplex 3 contains RPN2, DAD1, and OST48. The OST-A complex can form stable complexes with the Sec61 complex or with both the Sec61 and TRAP complexes. Interacts with PSEN1 and NCSTN; indicative for an association with the gamma-secretase complex.

It is found in the endoplasmic reticulum. It localises to the membrane. It functions in the pathway protein modification; protein glycosylation. Functionally, subunit of STT3A-containing oligosaccharyl transferase (OST-A) complex that catalyzes the initial transfer of a defined glycan (Glc(3)Man(9)GlcNAc(2) in eukaryotes) from the lipid carrier dolichol-pyrophosphate to an asparagine residue within an Asn-X-Ser/Thr consensus motif in nascent polypeptide chains, the first step in protein N-glycosylation. N-glycosylation occurs cotranslationally and the complex associates with the Sec61 complex at the channel-forming translocon complex that mediates protein translocation across the endoplasmic reticulum (ER). Within the OST-A complex, acts as an adapter that anchors the OST-A complex to the Sec61 complex. May be involved in N-glycosylation of APP (amyloid-beta precursor protein). Can modulate gamma-secretase cleavage of APP by enhancing endoprotelysis of PSEN1. This chain is Oligosaccharyltransferase complex subunit OSTC, found in Homo sapiens (Human).